The sequence spans 261 residues: Follistatin-related protein 3 (261 aa).

An N-terminal signal peptide occupies residues 1-26; sequence MRPRAPGPLWPLPWGALAWAVGFVGS. Residues 36–107 form the TB domain; sequence GVCWLQQGRE…SCEGVECGPG (72 aa). 8 disulfide bridges follow: Cys-38/Cys-61, Cys-48/Cys-92, Cys-62/Cys-95, Cys-99/Cys-110, Cys-104/Cys-119, Cys-121/Cys-153, Cys-125/Cys-146, and Cys-135/Cys-167. A glycan (N-linked (GlcNAc...) asparagine) is linked at Asn-73. Residues 99–119 form the Follistatin-like 1 domain; the sequence is CEGVECGPGKACRMLGGRPRC. 2 consecutive Kazal-like domains span residues 113 to 169 and 189 to 245; these read LGGR…RCRK and SAHC…SCAG. Positions 170–193 constitute a Follistatin-like 2 domain; the sequence is SCAHVVCLRPQSCVVDQTGSAHCV. Intrachain disulfides connect Cys-195–Cys-229, Cys-200–Cys-222, and Cys-211–Cys-243. The N-linked (GlcNAc...) asparagine glycan is linked to Asn-215. The tract at residues 242 to 261 is disordered; that stretch reads SCAGTPEPLDPESEEEENFV. Positions 250–261 are enriched in acidic residues; it reads LDPESEEEENFV.

Interacts with INHBA and INHBB. Interacts with FN1. Interacts with ADAM12. Interacts with MLLT10; the interaction enhances MLLT10 in vitro transcriptional activity and self-association. Interacts with MSTN.

It localises to the secreted. The protein localises to the nucleus. In terms of biological role, the secreted form is a binding and antagonizing protein for members of the TGF-beta family, such as activin, BMP2 and MSTN. Inhibits activin A-, activin B-, BMP2- and MSDT-induced cellular signaling; more effective on activin A than on activin B. Involved in bone formation; inhibits osteoclast differentiation. Involved in hematopoiesis; involved in differentiation of hemopoietic progenitor cells, increases hematopoietic cell adhesion to fibronectin and seems to contribute to the adhesion of hematopoietic precursor cells to the bone marrow stroma. The nuclear form is probably involved in transcriptional regulation via interaction with MLLT10. The polypeptide is Follistatin-related protein 3 (FSTL3) (Bos taurus (Bovine)).